The chain runs to 330 residues: Diacylglycerol acyltransferase/mycolyltransferase Ag85B (330 aa).

The N-terminal stretch at 1-40 is a signal peptide; the sequence is MTDLSKKVRAWGRRLLVGTAAAVTLPGLIGLAGGAPTAGA. Residue 82–83 participates in substrate binding; the sequence is LR. Positions 98–108 are fibronectin-binding; it reads FEWYYQSGLSI. An intrachain disulfide couples Cys-127 to Cys-132. Residues Ser-166 and Asp-194 each contribute to the substrate site. The active-site Nucleophile is the Ser-166. The active site involves Glu-270. Substrate contacts are provided by residues 272 to 275, Lys-279, and 302 to 304; these read FVRS and HSW. His-302 is an active-site residue.

The protein belongs to the mycobacterial A85 antigen family.

The protein resides in the secreted. It catalyses the reaction 2 alpha,alpha'-trehalose 6-mycolate = alpha,alpha'-trehalose 6,6'-bismycolate + alpha,alpha-trehalose. The enzyme catalyses an acyl-CoA + a 1,2-diacyl-sn-glycerol = a triacyl-sn-glycerol + CoA. In terms of biological role, the antigen 85 proteins (FbpA, FbpB, FbpC) are responsible for the high affinity of mycobacteria for fibronectin, a large adhesive glycoprotein, which facilitates the attachment of M.tuberculosis to murine alveolar macrophages (AMs). They also help to maintain the integrity of the cell wall by catalyzing the transfer of mycolic acids to cell wall arabinogalactan and through the synthesis of alpha,alpha-trehalose dimycolate (TDM, cord factor). They catalyze the transfer of a mycoloyl residue from one molecule of alpha,alpha-trehalose monomycolate (TMM) to another TMM, leading to the formation of TDM. This Mycobacterium scrofulaceum protein is Diacylglycerol acyltransferase/mycolyltransferase Ag85B (fbpB).